The primary structure comprises 132 residues: Riboflavin kinase (132 aa).

Residue 13-18 (GLGHGS) participates in CDP binding. Residues Thr40 and Asn42 each contribute to the Mg(2+) site. Positions 98 and 106 each coordinate FMN. Residue 111-114 (VYLR) coordinates CDP.

Belongs to the archaeal riboflavin kinase family. Mg(2+) serves as cofactor.

It carries out the reaction riboflavin + CTP = CDP + FMN + H(+). Its pathway is cofactor biosynthesis; FMN biosynthesis; FMN from riboflavin (CTP route): step 1/1. Functionally, catalyzes the CTP-dependent phosphorylation of riboflavin (vitamin B2) to form flavin mononucleotide (FMN). The polypeptide is Riboflavin kinase (Aeropyrum pernix (strain ATCC 700893 / DSM 11879 / JCM 9820 / NBRC 100138 / K1)).